The chain runs to 669 residues: DNA ligase (669 aa).

NAD(+)-binding positions include 34 to 38, 83 to 84, and Glu117; these read DAEYD and SL. Catalysis depends on Lys119, which acts as the N6-AMP-lysine intermediate. 4 residues coordinate NAD(+): Arg140, Glu177, Lys293, and Lys317. 4 residues coordinate Zn(2+): Cys411, Cys414, Cys429, and Cys434. Positions 591–669 constitute a BRCT domain; that stretch reads RLGGRFTGKT…EDEFLKMLEG (79 aa).

It belongs to the NAD-dependent DNA ligase family. LigA subfamily. Mg(2+) serves as cofactor. The cofactor is Mn(2+).

It carries out the reaction NAD(+) + (deoxyribonucleotide)n-3'-hydroxyl + 5'-phospho-(deoxyribonucleotide)m = (deoxyribonucleotide)n+m + AMP + beta-nicotinamide D-nucleotide.. In terms of biological role, DNA ligase that catalyzes the formation of phosphodiester linkages between 5'-phosphoryl and 3'-hydroxyl groups in double-stranded DNA using NAD as a coenzyme and as the energy source for the reaction. It is essential for DNA replication and repair of damaged DNA. The chain is DNA ligase from Geotalea daltonii (strain DSM 22248 / JCM 15807 / FRC-32) (Geobacter daltonii).